The following is a 338-amino-acid chain: Sporulation-specific protein 4 (338 aa).

Residues 14 to 37 (QEENKNFLHKNTNEPNEMEQSQTQ) form a disordered region. Positions 22–37 (HKNTNEPNEMEQSQTQ) are enriched in polar residues.

In terms of biological role, not essential for sporulation. Might be a component of the cell wall. The polypeptide is Sporulation-specific protein 4 (SPS4) (Saccharomyces cerevisiae (strain ATCC 204508 / S288c) (Baker's yeast)).